A 522-amino-acid polypeptide reads, in one-letter code: Maturase K (522 aa).

The protein belongs to the intron maturase 2 family. MatK subfamily.

It localises to the plastid. It is found in the chloroplast. Functionally, usually encoded in the trnK tRNA gene intron. Probably assists in splicing its own and other chloroplast group II introns. The polypeptide is Maturase K (Tigridia pavonia (Mexican shell flower)).